Here is a 1169-residue protein sequence, read N- to C-terminus: Chromosome partition protein Smc (1169 aa).

An ATP-binding site is contributed by 32 to 39 (PNGCGKSN). Coiled-coil stretches lie at residues 170 to 507 (ISKY…ALGE) and 659 to 1030 (REQQ…FQSL).

This sequence belongs to the SMC family. Homodimer.

It is found in the cytoplasm. Its function is as follows. Required for chromosome condensation and partitioning. The polypeptide is Chromosome partition protein Smc (Coxiella burnetii (strain RSA 493 / Nine Mile phase I)).